Reading from the N-terminus, the 416-residue chain is MLQHHQQQAQSGGYYDHYTQSPSPGSLTNADALNTTPFSVKDILNMVNQTEAYEGSYGHIDGAATASALFAAGEYQNPHQYLNHQQHQQSELPIPQQQLHHQHLDDGATTSSSLSPLLPPPPHQLYGGYQDYGMPAHMFQHHHGHPHQSFQHSASAYNMSASQFYAGASATAYQTPATYNYNYAGSGEVYGGATPSAVGIKSEYIPTPYVTPSPTLDLNSSAEVDSLQAPTQKLCVNPLSQRLMETASNSSSLRSIYGSDEGAKKKDNSQVTSSRSELRKNSISGNSNPGSNSGSTKPRMKRKPRVLFSQAQVLELECRFRLKKYLTGAEREIIAQKLNLSATQVKIWFQNRRYKSKRGDIDCEGIAKHLKLKSEPLDSPTSLPPPIPNHVMWPPTMQQSQQQQQHHAQQQQMQHM.

Composition is skewed to polar residues over residues 1 to 11 and 18 to 33; these read MLQHHQQQAQS and YTQS…ADAL. Disordered stretches follow at residues 1–33, 246–305, and 391–416; these read MLQH…ADAL, TASN…RKPR, and VMWP…MQHM. Positions 281–295 are enriched in low complexity; the sequence is NSISGNSNPGSNSGS. The segment at residues 301–360 is a DNA-binding region (homeobox); the sequence is KRKPRVLFSQAQVLELECRFRLKKYLTGAEREIIAQKLNLSATQVKIWFQNRRYKSKRGD. The segment covering 397 to 416 has biased composition (low complexity); the sequence is MQQSQQQQQHHAQQQQMQHM.

It localises to the nucleus. Functionally, required for the development of heart and visceral muscle; for the formation of somatic muscles. Has a crucial function in the early mesodermal subdivisions. The chain is Muscle-specific homeobox protein tinman (tin) from Drosophila melanogaster (Fruit fly).